We begin with the raw amino-acid sequence, 498 residues long: ATP synthase subunit beta, chloroplastic (498 aa).

An ATP-binding site is contributed by 172-179 (GGAGVGKT).

Belongs to the ATPase alpha/beta chains family. As to quaternary structure, F-type ATPases have 2 components, CF(1) - the catalytic core - and CF(0) - the membrane proton channel. CF(1) has five subunits: alpha(3), beta(3), gamma(1), delta(1), epsilon(1). CF(0) has four main subunits: a(1), b(1), b'(1) and c(9-12).

Its subcellular location is the plastid. The protein resides in the chloroplast thylakoid membrane. It catalyses the reaction ATP + H2O + 4 H(+)(in) = ADP + phosphate + 5 H(+)(out). In terms of biological role, produces ATP from ADP in the presence of a proton gradient across the membrane. The catalytic sites are hosted primarily by the beta subunits. This chain is ATP synthase subunit beta, chloroplastic, found in Zea mays (Maize).